Consider the following 80-residue polypeptide: Acyl carrier protein (80 aa).

Positions 4 to 79 constitute a Carrier domain; that stretch reads EEILQKVCSI…DAVKFIEEKK (76 aa). At serine 39 the chain carries O-(pantetheine 4'-phosphoryl)serine.

This sequence belongs to the acyl carrier protein (ACP) family. In terms of processing, 4'-phosphopantetheine is transferred from CoA to a specific serine of apo-ACP by AcpS. This modification is essential for activity because fatty acids are bound in thioester linkage to the sulfhydryl of the prosthetic group.

The protein localises to the cytoplasm. Its pathway is lipid metabolism; fatty acid biosynthesis. Its function is as follows. Carrier of the growing fatty acid chain in fatty acid biosynthesis. The protein is Acyl carrier protein of Prochlorococcus marinus subsp. pastoris (strain CCMP1986 / NIES-2087 / MED4).